Here is an 88-residue protein sequence, read N- to C-terminus: Antitoxin VapB3 (88 aa).

Its function is as follows. Antitoxin component of a type II toxin-antitoxin (TA) system. The polypeptide is Antitoxin VapB3 (vapB3) (Mycobacterium tuberculosis (strain CDC 1551 / Oshkosh)).